A 71-amino-acid polypeptide reads, in one-letter code: Long neurotoxin 1 (71 aa).

5 disulfides stabilise this stretch: C3–C20, C14–C41, C26–C30, C45–C56, and C57–C62.

It belongs to the three-finger toxin family. Long-chain subfamily. Type II alpha-neurotoxin sub-subfamily. Expressed by the venom gland.

Its subcellular location is the secreted. Functionally, binds with high affinity to muscular (alpha-1/CHRNA1) and neuronal (alpha-7/CHRNA7) nicotinic acetylcholine receptor (nAChR) and hinders acetylcholine binding to the receptor, thereby impairing neuromuscular and neuronal transmission. The sequence is that of Long neurotoxin 1 from Naja annulata annulata (Banded water cobra).